A 379-amino-acid chain; its full sequence is Cytochrome b (379 aa).

A run of 4 helical transmembrane segments spans residues 33–53 (FGSLLGACLTIQIITGLFLAM), 77–98 (WTIRYLHANGASMFFLCLFIHV), 113–133 (WNVGIILLFSVMATAFMGYVL), and 178–198 (FFALHFILPFIISALVMIHLL). Positions 83 and 97 each coordinate heme b. 2 residues coordinate heme b: His182 and His196. His201 serves as a coordination point for a ubiquinone. A run of 4 helical transmembrane segments spans residues 226 to 246 (TKDFLGLLLLILLLMTTALFY), 288 to 308 (LGGVLALILSILILMIIPFLQ), 320 to 340 (LSQFLFWILVADLLTLTWIGG), and 347 to 367 (FINIGQMASMLYFFLMIFIMP).

Belongs to the cytochrome b family. In terms of assembly, the cytochrome bc1 complex contains 11 subunits: 3 respiratory subunits (MT-CYB, CYC1 and UQCRFS1), 2 core proteins (UQCRC1 and UQCRC2) and 6 low-molecular weight proteins (UQCRH/QCR6, UQCRB/QCR7, UQCRQ/QCR8, UQCR10/QCR9, UQCR11/QCR10 and a cleavage product of UQCRFS1). This cytochrome bc1 complex then forms a dimer. Requires heme b as cofactor.

Its subcellular location is the mitochondrion inner membrane. Its function is as follows. Component of the ubiquinol-cytochrome c reductase complex (complex III or cytochrome b-c1 complex) that is part of the mitochondrial respiratory chain. The b-c1 complex mediates electron transfer from ubiquinol to cytochrome c. Contributes to the generation of a proton gradient across the mitochondrial membrane that is then used for ATP synthesis. This is Cytochrome b (MT-CYB) from Lepilemur ankaranensis (Ankarana sportive lemur).